The primary structure comprises 526 residues: Zinc finger protein Helios (526 aa).

A disordered region spans residues 28–94 (DLTSSTPNGQ…IESSEVADNR (67 aa)). Positions 29–50 (LTSSTPNGQHASPSHMTSTNSV) are enriched in polar residues. The residue at position 56 (Ser56) is a Phosphoserine. Residues 61–77 (DRQPLSREDEIRGHDEG) show a composition bias toward basic and acidic residues. Residues Ser78 and Ser79 each carry the phosphoserine modification. Lys95 participates in a covalent cross-link: Glycyl lysine isopeptide (Lys-Gly) (interchain with G-Cter in SUMO2). 4 consecutive C2H2-type zinc fingers follow at residues 112–134 (LKCD…KRSH), 140–162 (FHCN…IKLH), 168–190 (FKCP…LRTH), and 196–219 (HKCN…ERCH). At Lys288 the chain carries N6-acetyllysine. Residues 368–379 (ISRETSDSHENN) are compositionally biased toward basic and acidic residues. Positions 368 to 435 (ISRETSDSHE…LNPKRKQSPA (68 aa)) are disordered. Residues Lys442 and Lys448 each participate in a glycyl lysine isopeptide (Lys-Gly) (interchain with G-Cter in SUMO2) cross-link. 2 C2H2-type zinc fingers span residues 471–493 (FKCE…MGCH) and 499–523 (LECN…RGEH).

It belongs to the Ikaros C2H2-type zinc-finger protein family. In terms of assembly, can form homodimers. Interacts with IKZF4 and IKZF5. As to expression, expressed in outer hair cells (OHC) of the organ of Corti. Abundant in thymus, low expression in bone marrow and brain and no detectable expression in spleen, liver, kidney or muscle. Expressed in T-cells.

It is found in the nucleus. Its function is as follows. Transcriptional regulator required for outer hair cells (OHC) maturation and, consequently, for hearing. This is Zinc finger protein Helios (Ikzf2) from Mus musculus (Mouse).